A 577-amino-acid chain; its full sequence is Urease subunit alpha (577 aa).

The Urease domain occupies 136 to 577 (GAIDCHVHLI…LPMAQRYFLF (442 aa)). Residues His-141, His-143, and Lys-224 each coordinate Ni(2+). Lys-224 carries the N6-carboxylysine modification. His-226 is a substrate binding site. Positions 253 and 279 each coordinate Ni(2+). His-327 (proton donor) is an active-site residue. Asp-367 serves as a coordination point for Ni(2+).

This sequence belongs to the metallo-dependent hydrolases superfamily. Urease alpha subunit family. As to quaternary structure, heterotrimer of UreA (gamma), UreB (beta) and UreC (alpha) subunits. Three heterotrimers associate to form the active enzyme. The cofactor is Ni cation. Carboxylation allows a single lysine to coordinate two nickel ions.

The protein localises to the cytoplasm. It carries out the reaction urea + 2 H2O + H(+) = hydrogencarbonate + 2 NH4(+). The protein operates within nitrogen metabolism; urea degradation; CO(2) and NH(3) from urea (urease route): step 1/1. This chain is Urease subunit alpha, found in Mycobacterium ulcerans (strain Agy99).